Consider the following 420-residue polypeptide: Argininosuccinate synthase (420 aa).

23-31 (AYSGGLDTS) is a binding site for ATP. L-citrulline is bound at residue Tyr102. Gly132 contacts ATP. L-aspartate is bound by residues Thr134, Asn138, and Asp139. Position 138 (Asn138) interacts with L-citrulline. Arg142, Ser190, Glu274, and Tyr286 together coordinate L-citrulline.

It belongs to the argininosuccinate synthase family. Type 1 subfamily. Homotetramer.

The protein resides in the cytoplasm. The enzyme catalyses L-citrulline + L-aspartate + ATP = 2-(N(omega)-L-arginino)succinate + AMP + diphosphate + H(+). It participates in amino-acid biosynthesis; L-arginine biosynthesis; L-arginine from L-ornithine and carbamoyl phosphate: step 2/3. The chain is Argininosuccinate synthase from Renibacterium salmoninarum (strain ATCC 33209 / DSM 20767 / JCM 11484 / NBRC 15589 / NCIMB 2235).